Here is a 113-residue protein sequence, read N- to C-terminus: T cell receptor alpha variable 8-4 (113 aa).

The signal sequence occupies residues 1–20 (MLLLLVPVLEVIFTLGGTRA). The Ig-like domain occupies 21 to 113 (QSVTQLGSHV…DAAEYFCAVS (93 aa)). Cys42 and Cys110 are oxidised to a cystine. N-linked (GlcNAc...) asparagine glycosylation occurs at Asn43.

Alpha-beta TR is a heterodimer composed of an alpha and beta chain; disulfide-linked. The alpha-beta TR is associated with the transmembrane signaling CD3 coreceptor proteins to form the TR-CD3 (TcR or TCR). The assembly of alpha-beta TR heterodimers with CD3 occurs in the endoplasmic reticulum where a single alpha-beta TR heterodimer associates with one CD3D-CD3E heterodimer, one CD3G-CD3E heterodimer and one CD247 homodimer forming a stable octameric structure. CD3D-CD3E and CD3G-CD3E heterodimers preferentially associate with TR alpha and TR beta chains, respectively. The association of the CD247 homodimer is the last step of TcR assembly in the endoplasmic reticulum and is required for transport to the cell surface.

Its subcellular location is the cell membrane. Its function is as follows. V region of the variable domain of T cell receptor (TR) alpha chain that participates in the antigen recognition. Alpha-beta T cell receptors are antigen specific receptors which are essential to the immune response and are present on the cell surface of T lymphocytes. Recognize peptide-major histocompatibility (MH) (pMH) complexes that are displayed by antigen presenting cells (APC), a prerequisite for efficient T cell adaptive immunity against pathogens. Binding of alpha-beta TR to pMH complex initiates TR-CD3 clustering on the cell surface and intracellular activation of LCK that phosphorylates the ITAM motifs of CD3G, CD3D, CD3E and CD247 enabling the recruitment of ZAP70. In turn ZAP70 phosphorylates LAT, which recruits numerous signaling molecules to form the LAT signalosome. The LAT signalosome propagates signal branching to three major signaling pathways, the calcium, the mitogen-activated protein kinase (MAPK) kinase and the nuclear factor-kappa-B (NF-kB) pathways, leading to the mobilization of transcription factors that are critical for gene expression and essential for T cell growth and differentiation. The T cell repertoire is generated in the thymus, by V-(D)-J rearrangement. This repertoire is then shaped by intrathymic selection events to generate a peripheral T cell pool of self-MH restricted, non-autoaggressive T cells. Post-thymic interaction of alpha-beta TR with the pMH complexes shapes TR structural and functional avidity. This is T cell receptor alpha variable 8-4 from Homo sapiens (Human).